A 152-amino-acid polypeptide reads, in one-letter code: Serglycin (152 aa).

The signal sequence occupies residues 1–25; that stretch reads MQVPVGSRLVLALAFVLVWGSSVQG. Residues 26-74 constitute a propeptide, activation peptide; it reads YPARRARYQWVRCKPNGFFANCIEEKGPQFDLIDESNNIGPPMNNPVLM. A disulfide bridge links Cys-38 with Cys-47. A disordered region spans residues 66–115; it reads PPMNNPVLMEGPSKDFISNYDDYGSGSGSGSGSGSGSGSGSGSGFLGDME. A run of 10 repeats spans residues 89 to 90, 91 to 92, 93 to 94, 95 to 96, 97 to 98, 99 to 100, 101 to 102, 103 to 104, 105 to 106, and 107 to 108. The interval 89 to 108 is 10 X 2 AA tandem repeats of G-S; sequence GSGSGSGSGSGSGSGSGSGS. The segment covering 90 to 110 has biased composition (gly residues); it reads SGSGSGSGSGSGSGSGSGSGF. 2 O-linked (Xyl...) (glycosaminoglycan) serine glycosylation sites follow: Ser-92 and Ser-94. O-linked (Xyl...) (glycosaminoglycan) serine glycans are attached at residues Ser-98, Ser-100, Ser-102, Ser-104, Ser-106, and Ser-108.

This sequence belongs to the serglycin family. As to quaternary structure, binds to activated CD44 and to GZMB. In terms of processing, O-glycosylated; contains chondroitin sulfate and heparan sulfate.

It localises to the cytoplasmic granule. The protein localises to the cytolytic granule. Its subcellular location is the secreted. The protein resides in the extracellular space. It is found in the golgi apparatus. Plays a role in formation of mast cell secretory granules and mediates storage of various compounds in secretory vesicles. Required for storage of some proteases in both connective tissue and mucosal mast cells and for storage of granzyme B in T-lymphocytes. Plays a role in localizing neutrophil elastase in azurophil granules of neutrophils. Mediates processing of MMP2. Plays a role in cytotoxic cell granule-mediated apoptosis by forming a complex with granzyme B which is delivered to cells by perforin to induce apoptosis. Regulates the secretion of TNF-alpha and may also regulate protease secretion. Inhibits bone mineralization. This Mus musculus (Mouse) protein is Serglycin (Srgn).